The following is a 142-amino-acid chain: Large-conductance mechanosensitive channel (142 aa).

A run of 2 helical transmembrane segments spans residues 14-34 (VVDLAVAVIIGAAFGKIVSSL) and 86-106 (FGQFITVAVNFLLIAFVVFLV).

The protein belongs to the MscL family. Homopentamer.

The protein localises to the cell inner membrane. Channel that opens in response to stretch forces in the membrane lipid bilayer. May participate in the regulation of osmotic pressure changes within the cell. The sequence is that of Large-conductance mechanosensitive channel from Rhizorhabdus wittichii (strain DSM 6014 / CCUG 31198 / JCM 15750 / NBRC 105917 / EY 4224 / RW1) (Sphingomonas wittichii).